We begin with the raw amino-acid sequence, 221 residues long: Thiopurine S-methyltransferase (221 aa).

The S-adenosyl-L-methionine site is built by W12, L47, E68, and R125.

The protein belongs to the class I-like SAM-binding methyltransferase superfamily. TPMT family.

It localises to the cytoplasm. It carries out the reaction S-adenosyl-L-methionine + a thiopurine = S-adenosyl-L-homocysteine + a thiopurine S-methylether.. In Legionella pneumophila subsp. pneumophila (strain Philadelphia 1 / ATCC 33152 / DSM 7513), this protein is Thiopurine S-methyltransferase.